Consider the following 326-residue polypeptide: Beta-ketoacyl-[acyl-carrier-protein] synthase III (326 aa).

Catalysis depends on residues Cys-112 and His-251. Positions 252-256 (QANSR) are ACP-binding. The active site involves Asn-281.

It belongs to the thiolase-like superfamily. FabH family. As to quaternary structure, homodimer.

The protein localises to the cytoplasm. The catalysed reaction is malonyl-[ACP] + acetyl-CoA + H(+) = 3-oxobutanoyl-[ACP] + CO2 + CoA. It participates in lipid metabolism; fatty acid biosynthesis. Functionally, catalyzes the condensation reaction of fatty acid synthesis by the addition to an acyl acceptor of two carbons from malonyl-ACP. Catalyzes the first condensation reaction which initiates fatty acid synthesis and may therefore play a role in governing the total rate of fatty acid production. Possesses both acetoacetyl-ACP synthase and acetyl transacylase activities. Its substrate specificity determines the biosynthesis of branched-chain and/or straight-chain of fatty acids. This chain is Beta-ketoacyl-[acyl-carrier-protein] synthase III, found in Clostridium botulinum (strain Okra / Type B1).